The following is a 612-amino-acid chain: DNA mismatch repair protein MutL (612 aa).

The protein belongs to the DNA mismatch repair MutL/HexB family.

Functionally, this protein is involved in the repair of mismatches in DNA. It is required for dam-dependent methyl-directed DNA mismatch repair. May act as a 'molecular matchmaker', a protein that promotes the formation of a stable complex between two or more DNA-binding proteins in an ATP-dependent manner without itself being part of a final effector complex. The chain is DNA mismatch repair protein MutL from Herminiimonas arsenicoxydans.